A 253-amino-acid chain; its full sequence is 1-(5-phosphoribosyl)-5-[(5-phosphoribosylamino)methylideneamino] imidazole-4-carboxamide isomerase (253 aa).

The Proton acceptor role is filled by Asp19. Catalysis depends on Asp141, which acts as the Proton donor.

This sequence belongs to the HisA/HisF family.

The protein localises to the cytoplasm. The catalysed reaction is 1-(5-phospho-beta-D-ribosyl)-5-[(5-phospho-beta-D-ribosylamino)methylideneamino]imidazole-4-carboxamide = 5-[(5-phospho-1-deoxy-D-ribulos-1-ylimino)methylamino]-1-(5-phospho-beta-D-ribosyl)imidazole-4-carboxamide. Its pathway is amino-acid biosynthesis; L-histidine biosynthesis; L-histidine from 5-phospho-alpha-D-ribose 1-diphosphate: step 4/9. This is 1-(5-phosphoribosyl)-5-[(5-phosphoribosylamino)methylideneamino] imidazole-4-carboxamide isomerase from Rhodopirellula baltica (strain DSM 10527 / NCIMB 13988 / SH1).